Consider the following 126-residue polypeptide: Fluoride-specific ion channel FluC (126 aa).

4 consecutive transmembrane segments (helical) span residues 5-25 (GFVA…FFSV), 36-56 (YGTL…VAFF), 69-89 (LAVT…SEVI), and 99-119 (WAML…AFGI). The Na(+) site is built by G76 and T79.

The protein belongs to the fluoride channel Fluc/FEX (TC 1.A.43) family.

Its subcellular location is the cell inner membrane. It catalyses the reaction fluoride(in) = fluoride(out). With respect to regulation, na(+) is not transported, but it plays an essential structural role and its presence is essential for fluoride channel function. Its function is as follows. Fluoride-specific ion channel. Important for reducing fluoride concentration in the cell, thus reducing its toxicity. This is Fluoride-specific ion channel FluC from Cupriavidus metallidurans (strain ATCC 43123 / DSM 2839 / NBRC 102507 / CH34) (Ralstonia metallidurans).